The sequence spans 83 residues: Putative defensin-like protein 257 (83 aa).

Residues 1 to 25 (MMNVSLKLSFLVFILVIMSNLGSEA) form the signal peptide. Disulfide bonds link C57-C73, C63-C80, and C67-C82.

The protein belongs to the DEFL family.

The protein localises to the secreted. This chain is Putative defensin-like protein 257, found in Arabidopsis thaliana (Mouse-ear cress).